The sequence spans 175 residues: Hypoxanthine-guanine phosphoribosyltransferase (175 aa).

Diphosphate is bound by residues K40 and G41. Mg(2+) contacts are provided by E96 and D97. The active-site Proton acceptor is D100. GMP-binding positions include K128, 149 to 150 (FL), and D156. R162 serves as a coordination point for diphosphate.

It belongs to the purine/pyrimidine phosphoribosyltransferase family. Mg(2+) serves as cofactor.

The protein localises to the cytoplasm. It catalyses the reaction IMP + diphosphate = hypoxanthine + 5-phospho-alpha-D-ribose 1-diphosphate. The catalysed reaction is GMP + diphosphate = guanine + 5-phospho-alpha-D-ribose 1-diphosphate. It functions in the pathway purine metabolism; IMP biosynthesis via salvage pathway; IMP from hypoxanthine: step 1/1. Its pathway is purine metabolism; GMP biosynthesis via salvage pathway; GMP from guanine: step 1/1. Functionally, purine salvage pathway enzyme that catalyzes the transfer of the ribosyl-5-phosphate group from 5-phospho-alpha-D-ribose 1-diphosphate (PRPP) to the N9 position of the 6-oxopurines hypoxanthine and guanine to form the corresponding ribonucleotides IMP (inosine 5'-monophosphate) and GMP (guanosine 5'-monophosphate), with the release of PPi. The chain is Hypoxanthine-guanine phosphoribosyltransferase (hpt) from Mycoplasma pneumoniae (strain ATCC 29342 / M129 / Subtype 1) (Mycoplasmoides pneumoniae).